The primary structure comprises 262 residues: Acyl-[acyl-carrier-protein]--UDP-N-acetylglucosamine O-acyltransferase (262 aa).

This sequence belongs to the transferase hexapeptide repeat family. LpxA subfamily. In terms of assembly, homotrimer.

The protein resides in the cytoplasm. The enzyme catalyses a (3R)-hydroxyacyl-[ACP] + UDP-N-acetyl-alpha-D-glucosamine = a UDP-3-O-[(3R)-3-hydroxyacyl]-N-acetyl-alpha-D-glucosamine + holo-[ACP]. The protein operates within glycolipid biosynthesis; lipid IV(A) biosynthesis; lipid IV(A) from (3R)-3-hydroxytetradecanoyl-[acyl-carrier-protein] and UDP-N-acetyl-alpha-D-glucosamine: step 1/6. Functionally, involved in the biosynthesis of lipid A, a phosphorylated glycolipid that anchors the lipopolysaccharide to the outer membrane of the cell. The sequence is that of Acyl-[acyl-carrier-protein]--UDP-N-acetylglucosamine O-acyltransferase from Burkholderia multivorans (strain ATCC 17616 / 249).